The chain runs to 309 residues: MPISKTLPYNAIEQIKSYLLQLQNTICVSLESIDGQTKFHEDSWQRAAGGGGKTRIMANGNVFEKAGVNFSHVSGEQLPASASAHREELAGRHFSALGVSLVIHPQNPYVPTTHANVRFFVAEKEDSEPVWWFGGGFDLTPYYGFIEDCEHWHQTALNACLPFGETIYPKFKRWCDDYFFIKHRNEARGIGGLFFDDYNEISFDHSFELMRSIGDHFILAYEPIVARRKDIPFGNREKAFQNYRRGRYAEFNLVYDRGTLFGLQSGGRTESILMSLPPIVHWEYNWHPEKGSNEEKLYTDFLPAKDWLK.

Residue Ser-100 participates in substrate binding. A divalent metal cation contacts are provided by His-104 and His-114. The active-site Proton donor is the His-114. 116–118 contacts substrate; that stretch reads NVR. A divalent metal cation is bound by residues His-153 and His-183. The important for dimerization stretch occupies residues 248–283; the sequence is YAEFNLVYDRGTLFGLQSGGRTESILMSLPPIVHWE. 266–268 lines the substrate pocket; the sequence is GGR.

The protein belongs to the aerobic coproporphyrinogen-III oxidase family. Homodimer. Requires a divalent metal cation as cofactor.

Its subcellular location is the cytoplasm. It catalyses the reaction coproporphyrinogen III + O2 + 2 H(+) = protoporphyrinogen IX + 2 CO2 + 2 H2O. The protein operates within porphyrin-containing compound metabolism; protoporphyrin-IX biosynthesis; protoporphyrinogen-IX from coproporphyrinogen-III (O2 route): step 1/1. Functionally, involved in the heme biosynthesis. Catalyzes the aerobic oxidative decarboxylation of propionate groups of rings A and B of coproporphyrinogen-III to yield the vinyl groups in protoporphyrinogen-IX. The chain is Oxygen-dependent coproporphyrinogen-III oxidase from Legionella pneumophila (strain Lens).